We begin with the raw amino-acid sequence, 299 residues long: Putative transposase InsZ (299 aa).

Residues 276-291 (PSRPRSVKISKTRYPV) are compositionally biased toward basic residues. The disordered stretch occupies residues 276–299 (PSRPRSVKISKTRYPVKHSAAPLK).

This is Putative transposase InsZ (insZ) from Escherichia coli (strain K12).